A 290-amino-acid polypeptide reads, in one-letter code: MLEDKGELSIKEVLKCLPISEKSPANWAAWCFGLILVVLILIVTGYMFVVYLRSQRKKNQLADETGGIEIENSIRDPVVINNSLASRSCSENKVKKQSPESTEQDDFSKTTVDETIKEKSEKQPKTCAQKPKVPIPKASTPKTEKLVSKEPSTEELSVKNSLTDLKNEATKMANTSSSANRTGEISVEIVSPKPTTAVQASTPEKPMSSAESAMESSIGSDISTYIVSSKRSEVNNYNMIEAGRTPPMSFSESYAQTAIPTANTPPTVVHVSKPSSETSVSIPPSSAVKK.

Disordered stretches follow at residues 89–157, 172–217, and 261–290; these read CSEN…EELS, MANT…MESS, and TANTPPTVVHVSKPSSETSVSIPPSSAVKK. 2 stretches are compositionally biased toward basic and acidic residues: residues 106 to 124 and 142 to 152; these read DFSKTTVDETIKEKSEKQP and KTEKLVSKEPS. 2 stretches are compositionally biased toward polar residues: residues 172–183 and 193–202; these read MANTSSSANRTG and KPTTAVQAST. Composition is skewed to low complexity over residues 207–217 and 274–290; these read MSSAESAMESS and PSSETSVSIPPSSAVKK.

This is an uncharacterized protein from Caenorhabditis elegans.